A 687-amino-acid polypeptide reads, in one-letter code: MAGPTAPTTAPTAIRAGGPLLSPVRRNIIFTALVFGVLVAATGQTIVVPALPTIVAELGSTVDQSWAVTSYLLGGTVVVVVAGKLGDLLGRNRVLLGSVVVFVVGSVLCGLSQTMTMLAISRALQGVGAGAISVTAYALAAEVVPLRDRGRYQGVLGAVFGVNTVTGPLLGGWLTDYLSWRWAFWINVPVSIAVLTVAATAVPALARPPKPVIDYLGILVIAVATTALIMATSWGGTTYAWGSATIVGLLIGAAVALGFFVWLEGRAAAAILPPRLFGSPVFAVCCVLSFVVGFAMLGALTFVPIYLGYVDGASATASGLRTLPMVIGLLIASTGTGVLVGRTGRYKIFPVAGMALMAVAFLLMSQMDEWTPPLLQSLYLVVLGAGIGLSMQVLVLIVQNTSSFEDLGVATSGVTFFRVVGASFGTATFGALFVNFLDRRLGSALTSGAVPVPAVPSPAVLHQLPQSMAAPIVRAYAESLTQVFLCAVSVTVVGFILALLLREVPLTDIHDDADDLGDGFGVPRAESPEDVLEIAVRRMLPNGVRLRDIATQPGCGLGVAELWALLRIYQYQRLFEAVRLTDIGRHLHVPYQVFEPVFDRLVQTGYAARDGDILTLTPSGHRQVDSLAVLIRQWLLDHLAVAPGLKRQPDHQFEAALQHVTDAVLVQRDWYEDLGDLSESRQLAATT.

The next 14 helical transmembrane spans lie at 28-48 (IIFT…TIVV), 66-86 (WAVT…GKLG), 94-114 (VLLG…LSQT), 126-146 (GVGA…VVPL), 154-174 (GVLG…GGWL), 182-202 (WAFW…ATAV), 211-231 (PVID…LIMA), 243-263 (SATI…FVWL), 287-307 (VLSF…PIYL), 320-340 (LRTL…GVLV), 348-368 (IFPV…SQMD), 378-398 (LYLV…VLIV), 414-434 (VTFF…ALFV), and 480-500 (LTQV…LALL).

It belongs to the major facilitator superfamily. TCR/Tet family.

The protein resides in the cell membrane. This is an uncharacterized protein from Mycobacterium tuberculosis (strain CDC 1551 / Oshkosh).